The sequence spans 278 residues: Probable ribosomal RNA small subunit methyltransferase A (278 aa).

Residues N23, L25, G50, E71, D95, and N110 each coordinate S-adenosyl-L-methionine.

The protein belongs to the class I-like SAM-binding methyltransferase superfamily. rRNA adenine N(6)-methyltransferase family. RsmA subfamily.

It is found in the cytoplasm. In terms of biological role, specifically dimethylates two adjacent adenosines in the loop of a conserved hairpin near the 3'-end of 16S rRNA in the 30S particle. May play a critical role in biogenesis of 30S subunits. In Thermococcus gammatolerans (strain DSM 15229 / JCM 11827 / EJ3), this protein is Probable ribosomal RNA small subunit methyltransferase A.